Reading from the N-terminus, the 337-residue chain is Interferon gamma receptor 2 (337 aa).

The first 21 residues, 1–21 (MRPTLLWSLLLLLGVFAAAAA), serve as a signal peptide directing secretion. Topologically, residues 28–247 (SQLPAPQHPK…MADASTELQQ (220 aa)) are extracellular. The Fibronectin type-III 1 domain occupies 31 to 129 (PAPQHPKIRL…GALHSAWVTM (99 aa)). 2 N-linked (GlcNAc...) asparagine glycosylation sites follow: asparagine 56 and asparagine 85. Cysteine 86 and cysteine 94 form a disulfide bridge. N-linked (GlcNAc...) asparagine glycans are attached at residues asparagine 110, asparagine 137, asparagine 219, and asparagine 231. The Fibronectin type-III 2 domain maps to 142–240 (PPENIEVTPG…NISCYETMAD (99 aa)). A disulfide bridge links cysteine 209 with cysteine 234. The chain crosses the membrane as a helical span at residues 248-268 (VILISVGTFSLLSVLAGACFF). At 269 to 337 (LVLKYRGLIK…KEQEDVLQTL (69 aa)) the chain is on the cytoplasmic side. The Dileucine internalization motif signature appears at 276–277 (LI).

Belongs to the type II cytokine receptor family. Heterodimer with IFNGR1, to form the IFNG receptor complex. Interacts (via intracellular domain) with JAK2. As to expression, expressed in T-cells (at protein level).

The protein resides in the cell membrane. Its subcellular location is the cytoplasmic vesicle membrane. It is found in the golgi apparatus membrane. It localises to the endoplasmic reticulum membrane. The protein localises to the cytoplasm. In terms of biological role, associates with IFNGR1 to form a receptor for the cytokine interferon gamma (IFNG). Ligand binding stimulates activation of the JAK/STAT signaling pathway. Required for signal transduction in contrast to other receptor subunit responsible for ligand binding. The sequence is that of Interferon gamma receptor 2 from Homo sapiens (Human).